We begin with the raw amino-acid sequence, 277 residues long: Basic leucine zipper transcriptional factor ATF-like 2 (277 aa).

Disordered regions lie at residues 15-50 (LGES…HQQH), 126-146 (FQTP…CSHE), and 191-256 (SFSK…QKSS). In terms of domain architecture, bZIP spans 18-81 (SQKQLKKKQK…AGWGRTLHLH (64 aa)). The segment at 20–42 (KQLKKKQKNRVAAQRSRQKHTSK) is basic motif. Positions 41-50 (SKADALHQQH) are enriched in basic and acidic residues. A leucine-zipper region spans residues 46–67 (LHQQHESLEKQNHALRKEIQAL). Composition is skewed to polar residues over residues 213-227 (RQEQ…SSDS) and 247-256 (GSSTHWQKSS).

The protein belongs to the bZIP family. In terms of assembly, heterodimer; heterodimerizes with JUN family proteins.

It localises to the nucleus. Functionally, AP-1 family transcription factor that controls the differentiation of lineage-specific cells in the immune system. Selectively suppresses CCN1 transcription and hence blocks the downstream cell proliferation signals produced by CCN1 and inhibits CCN1-induced anchorage-independent growth and invasion in several cancer types. Possibly acts by interfering with AP-1 binding to CCN1 promoter. Following infection, participates in the differentiation of CD8(+) thymic conventional dendritic cells in the immune system. Acts via the formation of a heterodimer with JUN family proteins that recognizes and binds DNA sequence 5'-TGA[CG]TCA-3' and regulates expression of target genes. The sequence is that of Basic leucine zipper transcriptional factor ATF-like 2 (Batf2) from Mus musculus (Mouse).